Consider the following 67-residue polypeptide: DNA-directed RNA polymerase subunit omega (67 aa).

It belongs to the RNA polymerase subunit omega family. The RNAP catalytic core consists of 2 alpha, 1 beta, 1 beta' and 1 omega subunit. When a sigma factor is associated with the core the holoenzyme is formed, which can initiate transcription.

It carries out the reaction RNA(n) + a ribonucleoside 5'-triphosphate = RNA(n+1) + diphosphate. In terms of biological role, promotes RNA polymerase assembly. Latches the N- and C-terminal regions of the beta' subunit thereby facilitating its interaction with the beta and alpha subunits. The sequence is that of DNA-directed RNA polymerase subunit omega from Listeria welshimeri serovar 6b (strain ATCC 35897 / DSM 20650 / CCUG 15529 / CIP 8149 / NCTC 11857 / SLCC 5334 / V8).